A 96-amino-acid chain; its full sequence is UPF0235 protein CAB243 (96 aa).

It belongs to the UPF0235 family.

The chain is UPF0235 protein CAB243 from Chlamydia abortus (strain DSM 27085 / S26/3) (Chlamydophila abortus).